The following is a 176-amino-acid chain: ADP-ribosylation factor-like protein 11 (176 aa).

The N-myristoyl glycine moiety is linked to residue Gly2. GTP contacts are provided by residues Gly19–Thr26, Asp63–Gln67, and Asn122–Glu125.

It belongs to the small GTPase superfamily. Arf family.

Its function is as follows. May play a role in apoptosis. May act as a tumor suppressor. The polypeptide is ADP-ribosylation factor-like protein 11 (Arl11) (Mus musculus (Mouse)).